Here is a 341-residue protein sequence, read N- to C-terminus: Cell division protein FtsQ (341 aa).

The Cytoplasmic segment spans residues 1-126; sequence MTETDEGAPV…VARGVVRGLK (126 aa). The chain crosses the membrane as a helical span at residues 127–147; the sequence is TLFATVMFSIAGFGLGLALYV. Residues 148–341 are Extracellular-facing; it reads TPAMSVRNIV…VSSPDLPTVK (194 aa). One can recognise a POTRA domain in the interval 151–219; it reads MSVRNIVVTG…SALRITIVER (69 aa).

It belongs to the FtsQ/DivIB family. FtsQ subfamily.

The protein resides in the cell membrane. In terms of biological role, essential cell division protein. The polypeptide is Cell division protein FtsQ (Mycobacterium leprae (strain Br4923)).